Here is a 338-residue protein sequence, read N- to C-terminus: LINE-1 retrotransposable element ORF1 protein (338 aa).

Residues 1-40 (MGKKQNRKTGNSKTQSASPPPKERSSSPATEQSWMENDFD) form a disordered region. Polar residues-rich tracts occupy residues 8–17 (KTGNSKTQSA) and 26–35 (SSPATEQSWM). Positions 49 to 153 (RSNYSELRED…QSLQEIWDYV (105 aa)) form a coiled coil. The interval 157–252 (NLRLIGVPES…KGKPIRLTAD (96 aa)) is RNA recognition motif (RRM) domain. Residues 253 to 317 (LSAETLQARR…TTRPALKELL (65 aa)) are C-terminal domain (CTD).

Belongs to the transposase 22 family. As to quaternary structure, homotrimer (via coiled coil domain). May also form larger homooligomers. May interact with DDX39A, HNRNPA1, SERBP1 and YBX1. Interacts with TEX19 and UBR2. Interacts with MOV10. Interacts with APOBEC3D; this interaction inhibits LINE-1 retrotransposition. In terms of processing, polyubiquitinated, probably by UBR2, which induces its degradation.

Its subcellular location is the nucleus. The protein resides in the nucleolus. It is found in the cytoplasm. It localises to the cytoplasmic ribonucleoprotein granule. The protein localises to the stress granule. In terms of biological role, nucleic acid-binding protein which is essential for retrotransposition of LINE-1 elements in the genome. Functions as a nucleic acid chaperone binding its own transcript and therefore preferentially mobilizing the transcript from which they are encoded. In Homo sapiens (Human), this protein is LINE-1 retrotransposable element ORF1 protein (L1RE1).